A 209-amino-acid polypeptide reads, in one-letter code: MNDSLKSRGIMLVISSPSGGGKTTISHLLINELQNDLVRSISVTTREPRDGEINGKDYFFVTEPEFINLCNTNQMLEYAKVFGNYYGIPRKFVTDNIANGVSVLFSIDWQGAFKLIDIMREHVVSIFILPPSMEELQRRLYNRSGESDVINKRLGEAAFEISHCYRYDYVIVNHDIEQSVYQIKCIFTSEKLKTQRRVSLKQFIDNCIR.

A Guanylate kinase-like domain is found at glycine 9–threonine 188. Serine 16–threonine 23 lines the ATP pocket.

It belongs to the guanylate kinase family.

It is found in the cytoplasm. The catalysed reaction is GMP + ATP = GDP + ADP. Essential for recycling GMP and indirectly, cGMP. This Ehrlichia chaffeensis (strain ATCC CRL-10679 / Arkansas) protein is Guanylate kinase.